We begin with the raw amino-acid sequence, 240 residues long: Uridylate kinase (240 aa).

Lysine 13 to glycine 16 lines the ATP pocket. Position 55 (glycine 55) interacts with UMP. Residues glycine 56 and arginine 60 each coordinate ATP. UMP-binding positions include aspartate 76 and threonine 137 to threonine 144. 3 residues coordinate ATP: threonine 164, tyrosine 170, and aspartate 173.

This sequence belongs to the UMP kinase family. Homohexamer.

It localises to the cytoplasm. The enzyme catalyses UMP + ATP = UDP + ADP. Its pathway is pyrimidine metabolism; CTP biosynthesis via de novo pathway; UDP from UMP (UMPK route): step 1/1. Its activity is regulated as follows. Inhibited by UTP. In terms of biological role, catalyzes the reversible phosphorylation of UMP to UDP. The protein is Uridylate kinase of Helicobacter pylori (strain HPAG1).